Reading from the N-terminus, the 450-residue chain is Zinc finger protein 277 (450 aa).

At Ala-2 the chain carries N-acetylalanine. 2 C2H2-type zinc fingers span residues 224-248 and 355-381; these read LQCLYCEKTFRDKNTLKDHMRKKQH and HQCRCYGCHVKFKSKADLRTHMEETKH.

The protein belongs to the ZNF277 family. In terms of assembly, interacts (via zinc-finger domains) with RPS2/40S ribosomal protein S2, perhaps as nascent RPS2 is synthesized during translation; the interaction is direct; the interaction is extra-ribosomal. Interaction with RPS2 competes with the binding of RPS2 to protein arginine methyltransferase PRMT3. Interacts with Polycomb group (PcG) complex protein BMI1. May be part of a complex including at least ZNF277, BMI1 and RNF2/RING2.

The protein resides in the nucleus. Functionally, probable transcription factor. Involved in modulation of cellular senescence; represses transcription of the tumor suppressor gene INK4A/ARF, perhaps acting via the Polycomb group (PcG) complex PRC1. This is Zinc finger protein 277 (ZNF277) from Homo sapiens (Human).